Reading from the N-terminus, the 149-residue chain is Transcriptional repressor NrdR (149 aa).

The segment at 3–34 (CPFCGFEESKVVDSRSTDDNTTIRRRRECLKC) is a zinc-finger region. The ATP-cone domain maps to 49 to 139 (ILVIKKDLTR…VYRQFKDIDT (91 aa)).

It belongs to the NrdR family. It depends on Zn(2+) as a cofactor.

Its function is as follows. Negatively regulates transcription of bacterial ribonucleotide reductase nrd genes and operons by binding to NrdR-boxes. The sequence is that of Transcriptional repressor NrdR from Clostridium beijerinckii (strain ATCC 51743 / NCIMB 8052) (Clostridium acetobutylicum).